The chain runs to 315 residues: Olfactory receptor 10H5 (315 aa).

The Extracellular segment spans residues 1–25 (MQGLNHTSVSEFILVGFSAFPHLQL). Asn-5 carries N-linked (GlcNAc...) asparagine glycosylation. Residues 26-46 (MLFLLFLLMYLFTLLGNLLIM) form a helical membrane-spanning segment. Residues 47–54 (ATVWSERS) are Cytoplasmic-facing. A helical membrane pass occupies residues 55-75 (LHMPMYLFLCALSITEILYTV). The Extracellular portion of the chain corresponds to 76–99 (AIIPRMLADLLSTQRSIAFLACAS). Cys-97 and Cys-189 form a disulfide bridge. Residues 100–120 (QMFFSFSFGFTHSFLLTVMGY) traverse the membrane as a helical segment. Over 121-139 (DRYVAICHPLRYNVLMSLR) the chain is Cytoplasmic. The helical transmembrane segment at 140-160 (GCTCRVGCSWAGGLVMGMVVT) threads the bilayer. Topologically, residues 161 to 197 (SAIFHLAFCGHKEIHHFFCHVPPLLKLACGDDVLVVA) are extracellular. A helical membrane pass occupies residues 198 to 218 (KGVGLVCITALLGCFLLILLS). Over 219–238 (YAFIVAAILKIPSAEGRNKA) the chain is Cytoplasmic. Residues 239–259 (FSTCASHLTVVVVHYGFASVI) traverse the membrane as a helical segment. Residues 260–272 (YLKPKGPQSPEGD) are Extracellular-facing. The helical transmembrane segment at 273 to 293 (TLMGITYTVLTPFLSPIIFSL) threads the bilayer. At 294-315 (RNKELKVAMKKTCFTKLFPQNC) the chain is on the cytoplasmic side.

Belongs to the G-protein coupled receptor 1 family.

The protein localises to the cell membrane. Odorant receptor. The sequence is that of Olfactory receptor 10H5 (OR10H5) from Homo sapiens (Human).